The sequence spans 245 residues: Ribonuclease 3 (245 aa).

One can recognise an RNase III domain in the interval 18–146 (LSEFLENLSI…FVGAIYLDSG (129 aa)). Glu59 contacts Mg(2+). Asp63 is a catalytic residue. Mg(2+) is bound by residues Asp132 and Glu135. The active site involves Glu135. The DRBM domain maps to 173–242 (DYKSLLQEYV…AEVALKAMED (70 aa)).

This sequence belongs to the ribonuclease III family. Homodimer. It depends on Mg(2+) as a cofactor.

Its subcellular location is the cytoplasm. The enzyme catalyses Endonucleolytic cleavage to 5'-phosphomonoester.. In terms of biological role, digests double-stranded RNA. Involved in the processing of primary rRNA transcript to yield the immediate precursors to the large and small rRNAs (23S and 16S). Processes some mRNAs, and tRNAs when they are encoded in the rRNA operon. Processes pre-crRNA and tracrRNA of type II CRISPR loci if present in the organism. The chain is Ribonuclease 3 from Borreliella afzelii (strain PKo) (Borrelia afzelii).